The sequence spans 184 residues: Ribosome maturation factor RimM (184 aa).

Positions 101–180 (EGEFFYCDLV…KITTHNAKTL (80 aa)) constitute a PRC barrel domain.

It belongs to the RimM family. As to quaternary structure, binds ribosomal protein uS19.

It localises to the cytoplasm. In terms of biological role, an accessory protein needed during the final step in the assembly of 30S ribosomal subunit, possibly for assembly of the head region. Essential for efficient processing of 16S rRNA. May be needed both before and after RbfA during the maturation of 16S rRNA. It has affinity for free ribosomal 30S subunits but not for 70S ribosomes. In Helicobacter pylori (strain ATCC 700392 / 26695) (Campylobacter pylori), this protein is Ribosome maturation factor RimM.